A 254-amino-acid polypeptide reads, in one-letter code: Putative biopolymer transport protein ExbB-like 1 (254 aa).

The next 3 helical transmembrane spans lie at 39–59, 141–161, and 185–205; these read GGVV…TAFE, LETI…TGLI, and IGEA…ALLV.

The protein belongs to the ExbB/TolQ family.

The protein resides in the cell inner membrane. Functionally, involved in the TonB-dependent energy-dependent transport of various receptor-bound substrates. Protects ExbD from proteolytic degradation and functionally stabilizes TonB. The protein is Putative biopolymer transport protein ExbB-like 1 of Synechocystis sp. (strain ATCC 27184 / PCC 6803 / Kazusa).